The chain runs to 147 residues: Hemoglobin subunit gamma (147 aa).

Positions 3 to 147 (NFTAEDKAAI…VASALGSRYH (145 aa)) constitute a Globin domain. Heme b-binding residues include histidine 64 and histidine 93.

It belongs to the globin family. Heterotetramer of two alpha chains and two gamma chains in fetal hemoglobin (Hb F). In terms of tissue distribution, red blood cells.

Its function is as follows. Gamma chains make up the fetal hemoglobin F, in combination with alpha chains. The protein is Hemoglobin subunit gamma (HBG) of Aotus azarae (Azara's night monkey).